Reading from the N-terminus, the 84-residue chain is MDDDAAPRVEGVPVAVHKHALHDGLRQVAGPGAAAAHLPRWPPPQLAASRREAPPLSQRPHRTQGAGSPPETNEKLTNPQVKEK.

Residues 31–84 (PGAAAAHLPRWPPPQLAASRREAPPLSQRPHRTQGAGSPPETNEKLTNPQVKEK) are disordered. Residues 75 to 84 (KLTNPQVKEK) show a composition bias toward polar residues.

In terms of tissue distribution, expressed in testis and kidney, and, at lower levels, in urinary bladder and liver. Expressed by a high proportion of tumors of various histologic origin, including melanomas, sarcomas and colorectal carcinomas.

The sequence is that of Kidney-associated antigen 1 (KAAG1) from Homo sapiens (Human).